A 183-amino-acid chain; its full sequence is Large ribosomal subunit protein uL6 (183 aa).

Belongs to the universal ribosomal protein uL6 family. In terms of assembly, part of the 50S ribosomal subunit.

This protein binds to the 23S rRNA, and is important in its secondary structure. It is located near the subunit interface in the base of the L7/L12 stalk, and near the tRNA binding site of the peptidyltransferase center. The protein is Large ribosomal subunit protein uL6 of Chlamydia felis (strain Fe/C-56) (Chlamydophila felis).